The primary structure comprises 642 residues: Eukaryotic translation initiation factor 2A (642 aa).

WD repeat units lie at residues 69-115 (MKLS…KKDC), 186-224 (TYLI…ITKK), 289-331 (LTTG…HSLP), and 374-419 (FDAT…VFVK). The tract at residues 485-593 (ISQHPSREAS…KETSPEEKKI (109 aa)) is disordered. Low complexity-rich tracts occupy residues 493–507 (ASSN…AGGA) and 563–583 (TSPD…PTNN). Residues Ser564, Ser567, and Ser572 each carry the phosphoserine modification.

It belongs to the WD repeat EIF2A family. Ubiquitinated, probably leading to its degradation. May explain why it has a short half-life of 17 minutes.

Functions in the early steps of protein synthesis of a small number of specific mRNAs. Acts by directing the binding of methionyl-tRNAi to 40S ribosomal subunits. In contrast to the eIF-2 complex, it binds methionyl-tRNAi to 40S subunits in a codon-dependent manner, whereas the eIF-2 complex binds methionyl-tRNAi to 40S subunits in a GTP-dependent manner. Specifically associates with both 40S subunits and 80S ribosomes. This Saccharomyces cerevisiae (strain ATCC 204508 / S288c) (Baker's yeast) protein is Eukaryotic translation initiation factor 2A.